A 669-amino-acid chain; its full sequence is DNA ligase (669 aa).

NAD(+) is bound by residues 34–38 (DAEYD), 83–84 (SL), and Glu-114. The N6-AMP-lysine intermediate role is filled by Lys-116. NAD(+) is bound by residues Arg-137, Glu-171, Lys-287, and Lys-311. Zn(2+)-binding residues include Cys-405, Cys-408, Cys-423, and Cys-428. The region spanning 591–669 (NVESYFAGKT…EERFLQELNK (79 aa)) is the BRCT domain.

Belongs to the NAD-dependent DNA ligase family. LigA subfamily. It depends on Mg(2+) as a cofactor. The cofactor is Mn(2+).

It catalyses the reaction NAD(+) + (deoxyribonucleotide)n-3'-hydroxyl + 5'-phospho-(deoxyribonucleotide)m = (deoxyribonucleotide)n+m + AMP + beta-nicotinamide D-nucleotide.. In terms of biological role, DNA ligase that catalyzes the formation of phosphodiester linkages between 5'-phosphoryl and 3'-hydroxyl groups in double-stranded DNA using NAD as a coenzyme and as the energy source for the reaction. It is essential for DNA replication and repair of damaged DNA. The protein is DNA ligase of Bacillus mycoides (strain KBAB4) (Bacillus weihenstephanensis).